The sequence spans 330 residues: tRNA U34 carboxymethyltransferase (330 aa).

Carboxy-S-adenosyl-L-methionine is bound by residues lysine 91, tryptophan 105, lysine 110, glycine 130, 152 to 154, 181 to 182, methionine 196, tyrosine 200, and arginine 315; these read DPS and IE.

Belongs to the class I-like SAM-binding methyltransferase superfamily. CmoB family. As to quaternary structure, homotetramer.

The enzyme catalyses carboxy-S-adenosyl-L-methionine + 5-hydroxyuridine(34) in tRNA = 5-carboxymethoxyuridine(34) in tRNA + S-adenosyl-L-homocysteine + H(+). Functionally, catalyzes carboxymethyl transfer from carboxy-S-adenosyl-L-methionine (Cx-SAM) to 5-hydroxyuridine (ho5U) to form 5-carboxymethoxyuridine (cmo5U) at position 34 in tRNAs. The polypeptide is tRNA U34 carboxymethyltransferase (Shewanella halifaxensis (strain HAW-EB4)).